Reading from the N-terminus, the 276-residue chain is Glutamate racemase (276 aa).

Substrate is bound by residues 10 to 11 (DS) and 42 to 43 (YG). The active-site Proton donor/acceptor is the Cys74. 75–76 (NT) contributes to the substrate binding site. The active-site Proton donor/acceptor is the Cys185. 186–187 (TH) is a binding site for substrate.

Belongs to the aspartate/glutamate racemases family.

The enzyme catalyses L-glutamate = D-glutamate. The protein operates within cell wall biogenesis; peptidoglycan biosynthesis. Its function is as follows. Provides the (R)-glutamate required for cell wall biosynthesis. This Levilactobacillus brevis (strain ATCC 367 / BCRC 12310 / CIP 105137 / JCM 1170 / LMG 11437 / NCIMB 947 / NCTC 947) (Lactobacillus brevis) protein is Glutamate racemase.